A 67-amino-acid chain; its full sequence is Large ribosomal subunit protein bL35 (67 aa).

The protein belongs to the bacterial ribosomal protein bL35 family.

This is Large ribosomal subunit protein bL35 from Anaeromyxobacter sp. (strain Fw109-5).